Consider the following 196-residue polypeptide: Phosphoheptose isomerase (196 aa).

One can recognise an SIS domain in the interval M34–A196. Substrate is bound at residue N49 to G51. Residues H58 and E62 each contribute to the Zn(2+) site. Substrate-binding positions include E62, N91–D92, S117–S119, S122, and Q172. The Zn(2+) site is built by Q172 and H180.

The protein belongs to the SIS family. GmhA subfamily. As to quaternary structure, homotetramer. It depends on Zn(2+) as a cofactor.

It localises to the cytoplasm. The catalysed reaction is 2 D-sedoheptulose 7-phosphate = D-glycero-alpha-D-manno-heptose 7-phosphate + D-glycero-beta-D-manno-heptose 7-phosphate. It participates in carbohydrate biosynthesis; D-glycero-D-manno-heptose 7-phosphate biosynthesis; D-glycero-alpha-D-manno-heptose 7-phosphate and D-glycero-beta-D-manno-heptose 7-phosphate from sedoheptulose 7-phosphate: step 1/1. Functionally, catalyzes the isomerization of sedoheptulose 7-phosphate in D-glycero-D-manno-heptose 7-phosphate. The chain is Phosphoheptose isomerase from Shewanella denitrificans (strain OS217 / ATCC BAA-1090 / DSM 15013).